A 126-amino-acid chain; its full sequence is UPF0332 protein glr0978 (126 aa).

Belongs to the UPF0332 family.

This is UPF0332 protein glr0978 from Gloeobacter violaceus (strain ATCC 29082 / PCC 7421).